The following is a 563-amino-acid chain: Arginine--tRNA ligase (563 aa).

The short motif at 121-131 (PNIAKPFSIGH) is the 'HIGH' region element.

Belongs to the class-I aminoacyl-tRNA synthetase family. In terms of assembly, monomer.

It is found in the cytoplasm. The enzyme catalyses tRNA(Arg) + L-arginine + ATP = L-arginyl-tRNA(Arg) + AMP + diphosphate. The sequence is that of Arginine--tRNA ligase from Streptococcus pyogenes serotype M4 (strain MGAS10750).